Consider the following 577-residue polypeptide: 2-succinyl-5-enolpyruvyl-6-hydroxy-3-cyclohexene-1-carboxylate synthase (577 aa).

It belongs to the TPP enzyme family. MenD subfamily. In terms of assembly, homodimer. It depends on Mg(2+) as a cofactor. The cofactor is Mn(2+). Thiamine diphosphate is required as a cofactor.

It catalyses the reaction isochorismate + 2-oxoglutarate + H(+) = 5-enolpyruvoyl-6-hydroxy-2-succinyl-cyclohex-3-ene-1-carboxylate + CO2. The protein operates within quinol/quinone metabolism; 1,4-dihydroxy-2-naphthoate biosynthesis; 1,4-dihydroxy-2-naphthoate from chorismate: step 2/7. It participates in quinol/quinone metabolism; menaquinone biosynthesis. In terms of biological role, catalyzes the thiamine diphosphate-dependent decarboxylation of 2-oxoglutarate and the subsequent addition of the resulting succinic semialdehyde-thiamine pyrophosphate anion to isochorismate to yield 2-succinyl-5-enolpyruvyl-6-hydroxy-3-cyclohexene-1-carboxylate (SEPHCHC). This chain is 2-succinyl-5-enolpyruvyl-6-hydroxy-3-cyclohexene-1-carboxylate synthase, found in Porphyromonas gingivalis (strain ATCC BAA-308 / W83).